A 526-amino-acid polypeptide reads, in one-letter code: MGRLRPEEISSILKGAITDYESRVRTEEVGQVLEVGDGIARVHGLSNVMYQEMVEFEDARGEKVIGLALNLEEDNVGVIIAGDDRYILEGSTVRRTGRLASVPVGQGVLGRVINALGQPIDGRGEIQAEETRPVEIIAPGIIRRKDVDTPLQTGIKAIDSMIPIGRGQRELIIGDRKTGKTALAVDTIINQHDQNVKCIYVAVGQKDSAVAGVVAQLEEYGAMEYTTVINASASQPAPLQYLAPYAGCAIGEYFMHRGEDALVIYDDLSKHAVAYRQMMLLLRRPPGREAYPGDIFYLHSRLLERAARMSEEYGGGSLTALPIIETKAGDISAYIPTNVISITDGQIFLDLDLFNANQRPAIDVGLSVSRVGSSAQIKAMKKVAGTLKLDLSQYRELASFAQFGSDLDKATQETLARGERLTALLKQRERDPMPVEEQVAVIFGGTQGLLREVEPDDVPDWEAQLREYLRSSHEDLLKDIREKKELTDETAERLREAIERFNEGFEPARSEVKVETRPQEEEGEEG.

174–181 serves as a coordination point for ATP; sequence GDRKTGKT. The segment covering 505 to 520 has biased composition (basic and acidic residues); that stretch reads FEPARSEVKVETRPQE. The segment at 505–526 is disordered; the sequence is FEPARSEVKVETRPQEEEGEEG.

The protein belongs to the ATPase alpha/beta chains family. In terms of assembly, F-type ATPases have 2 components, CF(1) - the catalytic core - and CF(0) - the membrane proton channel. CF(1) has five subunits: alpha(3), beta(3), gamma(1), delta(1), epsilon(1). CF(0) has three main subunits: a(1), b(2) and c(9-12). The alpha and beta chains form an alternating ring which encloses part of the gamma chain. CF(1) is attached to CF(0) by a central stalk formed by the gamma and epsilon chains, while a peripheral stalk is formed by the delta and b chains.

Its subcellular location is the cell membrane. It carries out the reaction ATP + H2O + 4 H(+)(in) = ADP + phosphate + 5 H(+)(out). Its function is as follows. Produces ATP from ADP in the presence of a proton gradient across the membrane. The alpha chain is a regulatory subunit. This is ATP synthase subunit alpha from Rubrobacter xylanophilus (strain DSM 9941 / JCM 11954 / NBRC 16129 / PRD-1).